The sequence spans 178 residues: CRISPR system ring nuclease SSO2081 (178 aa).

Positions 105–106 (RK) are transition state stabilizer.

The protein belongs to the cOA ring nuclease family. As to quaternary structure, homodimer. It depends on Does not require a metal cofactor. as a cofactor.

The protein localises to the cytoplasm. The enzyme catalyses cyclic tetraadenylate = 2 5'-hydroxy-diadenylate 2',3'-cylic phosphate. Its function is as follows. CRISPR (clustered regularly interspaced short palindromic repeat) is an adaptive immune system that provides protection against mobile genetic elements (viruses, transposable elements and conjugative plasmids). CRISPR clusters contain spacers, sequences complementary to antecedent mobile elements, and target invading nucleic acids. CRISPR clusters are transcribed and processed into CRISPR RNA (crRNA). A nuclease that degrades cyclic oligoadenylates (cOA), second messengers that induce an antiviral state important for defense against invading nucleic acids. Destruction of cOA deactivates the Csx1 ribonuclease, preventing uncontrolled degradation of cellular RNA. Degrades cA4 (a tetraadenylate ring) into a linear diadenylate product with 5'-OH and 2',3'-cyclic phosphate termini. Is 10-fold more active than SSO1393, suggesting this is the major cA4 degradation enzyme. Is highly specific for cA4; it has very poor activity on cA6 and no discernible activity against a number of cyclic dinucleotides. There may be 2 active sites per homodimer. In Saccharolobus solfataricus (strain ATCC 35092 / DSM 1617 / JCM 11322 / P2) (Sulfolobus solfataricus), this protein is CRISPR system ring nuclease SSO2081.